Reading from the N-terminus, the 388-residue chain is Putrescine N-methyltransferase 1 (388 aa).

Polar residues-rich tracts occupy residues 1-14 (MEVI…STIF), 23-39 (GYQN…QNGT), and 46-88 (HQNG…GNEL). The interval 1 to 88 (MEVISTNTNG…TISHDNGNEL (88 aa)) is disordered. A PABS domain is found at 99–336 (PGWFSEFSAL…GVIGYMLCST (238 aa)). Residues Gln-130, Glu-205, and 236–237 (DG) contribute to the S-adenosyl-L-methionine site. Residue Asp-255 is the Proton acceptor of the active site. Tyr-324 is a binding site for S-adenosyl-L-methionine.

This sequence belongs to the class I-like SAM-binding methyltransferase superfamily. Spermidine/spermine synthase family. In terms of tissue distribution, mainly expressed in roots.

The enzyme catalyses putrescine + S-adenosyl-L-methionine = N-methylputrescine + S-adenosyl-L-homocysteine + H(+). Its pathway is alkaloid biosynthesis; nicotine biosynthesis. Involved in the biosynthesis of pyridine alkaloid natural products, leading mainly to the production of anabasine, anatabine, nicotine and nornicotine, effective deterrents against herbivores with antiparasitic and pesticide properties (neurotoxins); nornicotine serves as the precursor in the synthesis of the carcinogen compound N'-nitrosonornicotine (NNN). Methyltransferase that mediates the conversion of putrescine to N-methylputrescine. In Nicotiana attenuata (Coyote tobacco), this protein is Putrescine N-methyltransferase 1.